Reading from the N-terminus, the 29-residue chain is Alpha-amylase inhibitor 2 (29 aa).

It belongs to the protease inhibitor I6 (cereal trypsin/alpha-amylase inhibitor) family.

The protein resides in the secreted. Alpha-amylase inhibitor. In Saussurea costus (Costus), this protein is Alpha-amylase inhibitor 2.